The sequence spans 1059 residues: Carbamoyl phosphate synthase large chain (1059 aa).

The carboxyphosphate synthetic domain stretch occupies residues 1–401 (MPKRSDIKKI…SLLKACRSLE (401 aa)). Residues arginine 129, arginine 169, glycine 175, glycine 176, arginine 208, isoleucine 210, glutamate 215, glycine 241, isoleucine 242, histidine 243, glutamine 284, and glutamate 298 each contribute to the ATP site. In terms of domain architecture, ATP-grasp 1 spans 133–327 (KQLMEELEQP…IAKLAAKIAV (195 aa)). Mg(2+) contacts are provided by glutamine 284, glutamate 298, and asparagine 300. The Mn(2+) site is built by glutamine 284, glutamate 298, and asparagine 300. An oligomerization domain region spans residues 402-546 (IGVYHNEMSE…YSTYEWENES (145 aa)). The carbamoyl phosphate synthetic domain stretch occupies residues 547-929 (IKSDKESVIV…ALYKAFEASY (383 aa)). The ATP-grasp 2 domain maps to 671–861 (EQALKDLDIP…MAQVATNLIL (191 aa)). Residues arginine 707, serine 746, isoleucine 748, glutamate 752, glycine 777, valine 778, histidine 779, serine 780, glutamine 820, and glutamate 832 each coordinate ATP. Positions 820, 832, and 834 each coordinate Mg(2+). Glutamine 820, glutamate 832, and asparagine 834 together coordinate Mn(2+). One can recognise an MGS-like domain in the interval 930 to 1059 (LHLPTFGNVI…ESRSFTTEAI (130 aa)). The tract at residues 930–1059 (LHLPTFGNVI…ESRSFTTEAI (130 aa)) is allosteric domain.

It belongs to the CarB family. As to quaternary structure, composed of two chains; the small (or glutamine) chain promotes the hydrolysis of glutamine to ammonia, which is used by the large (or ammonia) chain to synthesize carbamoyl phosphate. Tetramer of heterodimers (alpha,beta)4. Requires Mg(2+) as cofactor. Mn(2+) serves as cofactor.

It catalyses the reaction hydrogencarbonate + L-glutamine + 2 ATP + H2O = carbamoyl phosphate + L-glutamate + 2 ADP + phosphate + 2 H(+). The catalysed reaction is hydrogencarbonate + NH4(+) + 2 ATP = carbamoyl phosphate + 2 ADP + phosphate + 2 H(+). Its pathway is amino-acid biosynthesis; L-arginine biosynthesis; carbamoyl phosphate from bicarbonate: step 1/1. The protein operates within pyrimidine metabolism; UMP biosynthesis via de novo pathway; (S)-dihydroorotate from bicarbonate: step 1/3. Its function is as follows. Large subunit of the glutamine-dependent carbamoyl phosphate synthetase (CPSase). CPSase catalyzes the formation of carbamoyl phosphate from the ammonia moiety of glutamine, carbonate, and phosphate donated by ATP, constituting the first step of 2 biosynthetic pathways, one leading to arginine and/or urea and the other to pyrimidine nucleotides. The large subunit (synthetase) binds the substrates ammonia (free or transferred from glutamine from the small subunit), hydrogencarbonate and ATP and carries out an ATP-coupled ligase reaction, activating hydrogencarbonate by forming carboxy phosphate which reacts with ammonia to form carbamoyl phosphate. The polypeptide is Carbamoyl phosphate synthase large chain (Streptococcus thermophilus (strain ATCC BAA-250 / LMG 18311)).